We begin with the raw amino-acid sequence, 193 residues long: Large ribosomal subunit protein uL5 (193 aa).

This sequence belongs to the universal ribosomal protein uL5 family. As to quaternary structure, part of the 50S ribosomal subunit; part of the 5S rRNA/L5/L18/L25 subcomplex. Contacts the 5S rRNA and the P site tRNA. Forms a bridge to the 30S subunit in the 70S ribosome.

In terms of biological role, this is one of the proteins that bind and probably mediate the attachment of the 5S RNA into the large ribosomal subunit, where it forms part of the central protuberance. In the 70S ribosome it contacts protein S13 of the 30S subunit (bridge B1b), connecting the 2 subunits; this bridge is implicated in subunit movement. Contacts the P site tRNA; the 5S rRNA and some of its associated proteins might help stabilize positioning of ribosome-bound tRNAs. In Novosphingobium aromaticivorans (strain ATCC 700278 / DSM 12444 / CCUG 56034 / CIP 105152 / NBRC 16084 / F199), this protein is Large ribosomal subunit protein uL5.